The sequence spans 215 residues: Vesicle transport protein SFT2C (215 aa).

Residues 1 to 82 (MADLHRQLQE…RGQRLAAGGG (82 aa)) are Cytoplasmic-facing. A helical membrane pass occupies residues 83 to 103 (CLLLAALCFGLAALYAPVLLL). At 104–107 (RARK) the chain is on the lumenal side. Residues 108 to 128 (FALLWSLGSALALAGSALLRG) form a helical membrane-spanning segment. Topologically, residues 129-142 (GAACGRLLRCEEAP) are cytoplasmic. A helical membrane pass occupies residues 143 to 163 (SRPALLYMAALGATLFAALGL). Residues 164–166 (RST) are Lumenal-facing. The helical transmembrane segment at 167-187 (LLTVLGAGAQVAALLAALVGL) threads the bilayer. The Cytoplasmic segment spans residues 188–215 (LPWGGGTALRLALGRLGRGAGLAKVLPV).

The protein belongs to the SFT2 family.

The protein localises to the membrane. Functionally, may be involved in fusion of retrograde transport vesicles derived from an endocytic compartment with the Golgi complex. The protein is Vesicle transport protein SFT2C of Homo sapiens (Human).